We begin with the raw amino-acid sequence, 642 residues long: MPVITLPDGSQRHYDHPVSPMDVALDIGPGLAKATIAGRVNGELVDASDLIENDATLAIITAKDEEGLEIIRHSCAHLLGHAIKQLWPHTKMAIGPVVDNGFYYDVDLDRTLTQEDVEALEKRMHELAEKNYDVIKKKVSWHDARETFVKRGETYKVAILDENIAHDDKPGLYHHEEYVDMCRGPHVPNMRFCHHFKLMKTAGAYWRGDSNNKMLQRIYGTAWADKKALNAYLQRLEEAAKRDHRKIGKQLDLYHMQEEAPGMVFWHNDGWTIFRELEVFVRSKLKEYQYQEVKGPFMMGRVLWEKTGHWDNYKDAMFTTSSENREYCIKPMNCPGHVQIFNQGLKSYRDLPLRMAEFGSCHRNEPSGALHGLMRVRGFTQDDAHIFCTEEQIRDEVNACIRMVYDMYSTFGFEKIVVKLSTRPDKRIGSDEMWDRAEADLAVALEENNIPFEYQLGEGAFYGPKIEFTLYDCLDRAWQCGTVQLDFSLPSRLSASYVGEDNERKVPVMIHRAILGSMERFIGILTEEFAGFFPTWLAPVQVVVMNITDSQSEYVNELTQKLQNAGIRVKADLRNEKIGFKIREHTLRRVPYMLVCGDKEVEAGKVAVRTRRGKDLGSLDVNDVIEKLQQEIRSRSLQQLEE.

The TGS domain occupies 1-61 (MPVITLPDGS…ENDATLAIIT (61 aa)). The tract at residues 243 to 534 (DHRKIGKQLD…LTEEFAGFFP (292 aa)) is catalytic. Zn(2+) contacts are provided by Cys-334, His-385, and His-511.

It belongs to the class-II aminoacyl-tRNA synthetase family. In terms of assembly, homodimer. The cofactor is Zn(2+).

The protein localises to the cytoplasm. The enzyme catalyses tRNA(Thr) + L-threonine + ATP = L-threonyl-tRNA(Thr) + AMP + diphosphate + H(+). Catalyzes the attachment of threonine to tRNA(Thr) in a two-step reaction: L-threonine is first activated by ATP to form Thr-AMP and then transferred to the acceptor end of tRNA(Thr). Also edits incorrectly charged L-seryl-tRNA(Thr). The chain is Threonine--tRNA ligase from Salmonella gallinarum (strain 287/91 / NCTC 13346).